Consider the following 376-residue polypeptide: DNA replication and repair protein RecF (376 aa).

Glycine 30–serine 37 serves as a coordination point for ATP.

Belongs to the RecF family.

The protein localises to the cytoplasm. In terms of biological role, the RecF protein is involved in DNA metabolism; it is required for DNA replication and normal SOS inducibility. RecF binds preferentially to single-stranded, linear DNA. It also seems to bind ATP. This chain is DNA replication and repair protein RecF, found in Trichormus variabilis (strain ATCC 29413 / PCC 7937) (Anabaena variabilis).